We begin with the raw amino-acid sequence, 279 residues long: Protein phosphatase 1 regulatory subunit 3E (279 aa).

Residues S16 and S33 each carry the phosphoserine modification. Residues 28–89 (RSQRPSLEEE…RSPDTRKRVR (62 aa)) are disordered. Over residues 51 to 65 (ARSRAHVPGRGRRAR) the composition is skewed to basic residues. S66 bears the Phosphoserine mark. Residues 87–90 (RVRF) carry the PP1-binding motif motif. Positions 154-259 (AARLQAQRIC…NNGGRDYALL (106 aa)) constitute a CBM21 domain. The glycogen-binding motif stretch occupies residues 176-198 (GSARVLDLAYEKRVSVRWSADGW). Residues 248–256 (WDNNGGRDY) are substrate-binding motif.

In terms of tissue distribution, expressed in liver and heart, with low levels in skeletal muscle.

Functionally, acts as a glycogen-targeting subunit for PP1. PP1 is involved in glycogen metabolism and contributes to the activation of glycogen synthase leading to an increase in glycogen synthesis. This Rattus norvegicus (Rat) protein is Protein phosphatase 1 regulatory subunit 3E (Ppp1r3e).